The sequence spans 92 residues: Large ribosomal subunit protein eL31 (92 aa).

Belongs to the eukaryotic ribosomal protein eL31 family.

In Desulfurococcus amylolyticus (strain DSM 18924 / JCM 16383 / VKM B-2413 / 1221n) (Desulfurococcus kamchatkensis), this protein is Large ribosomal subunit protein eL31.